Consider the following 200-residue polypeptide: Methylthioribulose-1-phosphate dehydratase-like protein (200 aa).

It belongs to the aldolase class II family. MtnB subfamily.

This Schizosaccharomyces pombe (strain 972 / ATCC 24843) (Fission yeast) protein is Methylthioribulose-1-phosphate dehydratase-like protein.